A 243-amino-acid polypeptide reads, in one-letter code: 1-(5-phosphoribosyl)-5-[(5-phosphoribosylamino)methylideneamino] imidazole-4-carboxamide isomerase (243 aa).

Aspartate 8 acts as the Proton acceptor in catalysis. Aspartate 130 serves as the catalytic Proton donor.

Belongs to the HisA/HisF family.

Its subcellular location is the cytoplasm. The enzyme catalyses 1-(5-phospho-beta-D-ribosyl)-5-[(5-phospho-beta-D-ribosylamino)methylideneamino]imidazole-4-carboxamide = 5-[(5-phospho-1-deoxy-D-ribulos-1-ylimino)methylamino]-1-(5-phospho-beta-D-ribosyl)imidazole-4-carboxamide. The protein operates within amino-acid biosynthesis; L-histidine biosynthesis; L-histidine from 5-phospho-alpha-D-ribose 1-diphosphate: step 4/9. The chain is 1-(5-phosphoribosyl)-5-[(5-phosphoribosylamino)methylideneamino] imidazole-4-carboxamide isomerase from Vesicomyosocius okutanii subsp. Calyptogena okutanii (strain HA).